Here is a 283-residue protein sequence, read N- to C-terminus: Peflin (283 aa).

8 consecutive repeat copies span residues Pro-21–Gln-30, Gln-36–Pro-44, Ala-45–Pro-54, Ser-55–Pro-62, Ala-71–Gln-79, Ala-80–Val-87, Pro-88–Ser-95, and Gln-96–Gly-104. Residues Pro-21–Gly-104 are 8 X 9 AA approximate tandem repeat of [AP]-P-G-G-P-Y-G-G-P-P. Over residues Pro-37 to Gly-70 the composition is skewed to low complexity. The segment at Pro-37–Gly-113 is disordered. Over residues Ala-71–Pro-81 the composition is skewed to gly residues. The segment covering Tyr-93 to Gly-104 has biased composition (low complexity). EF-hand domains follow at residues Gly-113–Ser-148, Thr-154–Trp-179, Arg-180–Gln-215, Leu-216–Met-252, and Thr-253–Leu-282. Asp-126, Asp-128, Ser-130, Tyr-132, and Glu-137 together coordinate Ca(2+). Ca(2+) is bound by residues Asp-193, Asp-195, Ser-197, Ser-199, and Glu-204.

In terms of assembly, heterodimer; heterodimerizes (via the EF-hand 5) with pdcd6.

The protein localises to the cytoplasm. Its subcellular location is the endoplasmic reticulum. It localises to the membrane. The protein resides in the cytoplasmic vesicle. It is found in the COPII-coated vesicle membrane. Its function is as follows. Calcium-binding protein that acts as an adapter that bridges unrelated proteins or stabilizes weak protein-protein complexes in response to calcium. Acts as a negative regulator of ER-Golgi transport. In Xenopus laevis (African clawed frog), this protein is Peflin.